A 399-amino-acid polypeptide reads, in one-letter code: Probable aspartate/prephenate aminotransferase (399 aa).

Gly-39, Trp-125, and Asn-175 together coordinate L-aspartate. Position 239 is an N6-(pyridoxal phosphate)lysine (Lys-239). Arg-375 provides a ligand contact to L-aspartate.

It belongs to the class-I pyridoxal-phosphate-dependent aminotransferase family. In terms of assembly, homodimer. The cofactor is pyridoxal 5'-phosphate.

The protein localises to the cytoplasm. It carries out the reaction L-aspartate + 2-oxoglutarate = oxaloacetate + L-glutamate. It catalyses the reaction L-arogenate + 2-oxoglutarate = prephenate + L-glutamate. Catalyzes the reversible conversion of aspartate and 2-oxoglutarate to glutamate and oxaloacetate. Can also transaminate prephenate in the presence of glutamate. This chain is Probable aspartate/prephenate aminotransferase (aatA), found in Rickettsia bellii (strain RML369-C).